Reading from the N-terminus, the 377-residue chain is Succinyl-diaminopimelate desuccinylase (377 aa).

Histidine 71 is a binding site for Zn(2+). Aspartate 73 is a catalytic residue. Aspartate 102 contacts Zn(2+). Glutamate 132 serves as the catalytic Proton acceptor. Positions 133, 161, and 346 each coordinate Zn(2+).

Belongs to the peptidase M20A family. DapE subfamily. As to quaternary structure, homodimer. Requires Zn(2+) as cofactor. Co(2+) is required as a cofactor.

It catalyses the reaction N-succinyl-(2S,6S)-2,6-diaminopimelate + H2O = (2S,6S)-2,6-diaminopimelate + succinate. It participates in amino-acid biosynthesis; L-lysine biosynthesis via DAP pathway; LL-2,6-diaminopimelate from (S)-tetrahydrodipicolinate (succinylase route): step 3/3. Its function is as follows. Catalyzes the hydrolysis of N-succinyl-L,L-diaminopimelic acid (SDAP), forming succinate and LL-2,6-diaminopimelate (DAP), an intermediate involved in the bacterial biosynthesis of lysine and meso-diaminopimelic acid, an essential component of bacterial cell walls. The protein is Succinyl-diaminopimelate desuccinylase of Rhizorhabdus wittichii (strain DSM 6014 / CCUG 31198 / JCM 15750 / NBRC 105917 / EY 4224 / RW1) (Sphingomonas wittichii).